The chain runs to 430 residues: MPYIESILAREVLDSRGNPTVEVEVYTESGAFGKAIVPSGASTGQHESVELRDCDAKRFLGKGVLQAVKNVTEVIQPELEGYSVLEQTLIDKLLIKVDGTPNKSNLGANAILGVSLACAKAAANYLNLEFYQYVGGVWPKQMPVPMMNVINGGAHASNSVDFQEFMILPIGAPSFKEALRYGAEVFHHLGKILKQKGLPTTVGDEGGYAPDLNSNEEALQIILEAIKSAGYEPGKDIFLGMDVAASEFYDKKIQKYVLASENNKSFSSKELVHYYETLVAKYPIISIEDGLDENDWDGWKYLTQKLGNQIQLVGDDLFVTNTQKLAKGIENKIGNSILIKLNQIGTLTETLETIEMAKKASYTAVISHRSGETEDTTIADLAVATNSGQIKTGSCSRTDRIAKYNQLLRIEDQLVEAPFLGLKTFYNLKK.

Residue glutamine 163 participates in (2R)-2-phosphoglycerate binding. Glutamate 205 acts as the Proton donor in catalysis. Residues aspartate 242, glutamate 288, and aspartate 315 each contribute to the Mg(2+) site. The (2R)-2-phosphoglycerate site is built by lysine 340, arginine 369, serine 370, and lysine 391. The active-site Proton acceptor is the lysine 340.

The protein belongs to the enolase family. It depends on Mg(2+) as a cofactor.

It is found in the cytoplasm. Its subcellular location is the secreted. The protein resides in the cell surface. The catalysed reaction is (2R)-2-phosphoglycerate = phosphoenolpyruvate + H2O. It functions in the pathway carbohydrate degradation; glycolysis; pyruvate from D-glyceraldehyde 3-phosphate: step 4/5. In terms of biological role, catalyzes the reversible conversion of 2-phosphoglycerate (2-PG) into phosphoenolpyruvate (PEP). It is essential for the degradation of carbohydrates via glycolysis. This chain is Enolase, found in Aster yellows witches'-broom phytoplasma (strain AYWB).